Reading from the N-terminus, the 348-residue chain is Protein RecA (348 aa).

65 to 72 (GPESSGKT) is an ATP binding site.

It belongs to the RecA family.

The protein localises to the cytoplasm. Its function is as follows. Can catalyze the hydrolysis of ATP in the presence of single-stranded DNA, the ATP-dependent uptake of single-stranded DNA by duplex DNA, and the ATP-dependent hybridization of homologous single-stranded DNAs. It interacts with LexA causing its activation and leading to its autocatalytic cleavage. This is Protein RecA from Alteromonas mediterranea (strain DSM 17117 / CIP 110805 / LMG 28347 / Deep ecotype).